Here is a 513-residue protein sequence, read N- to C-terminus: ATP synthase subunit alpha (513 aa).

ATP is bound at residue 169–176 (GDRQTGKT).

The protein belongs to the ATPase alpha/beta chains family. As to quaternary structure, F-type ATPases have 2 components, CF(1) - the catalytic core - and CF(0) - the membrane proton channel. CF(1) has five subunits: alpha(3), beta(3), gamma(1), delta(1), epsilon(1). CF(0) has three main subunits: a(1), b(2) and c(9-12). The alpha and beta chains form an alternating ring which encloses part of the gamma chain. CF(1) is attached to CF(0) by a central stalk formed by the gamma and epsilon chains, while a peripheral stalk is formed by the delta and b chains.

It is found in the cell inner membrane. The enzyme catalyses ATP + H2O + 4 H(+)(in) = ADP + phosphate + 5 H(+)(out). Functionally, produces ATP from ADP in the presence of a proton gradient across the membrane. The alpha chain is a regulatory subunit. The chain is ATP synthase subunit alpha from Haemophilus ducreyi (strain 35000HP / ATCC 700724).